Reading from the N-terminus, the 482-residue chain is Anaerobic nitric oxide reductase flavorubredoxin (482 aa).

Positions leucine 30 to isoleucine 210 are zinc metallo-hydrolase. Fe cation-binding residues include histidine 79, glutamate 81, aspartate 83, histidine 147, aspartate 166, and histidine 227. The region spanning isoleucine 254 to alanine 393 is the Flavodoxin-like domain. FMN-binding positions include threonine 260 to asparagine 264 and alanine 342 to leucine 369. Residues glycine 426–leucine 477 form the Rubredoxin-like domain. Fe cation-binding residues include cysteine 431, cysteine 434, cysteine 464, and cysteine 467.

In the N-terminal section; belongs to the zinc metallo-hydrolase group 3 family. In terms of assembly, homotetramer. Fe cation serves as cofactor. It depends on FMN as a cofactor.

The protein resides in the cytoplasm. It functions in the pathway nitrogen metabolism; nitric oxide reduction. Functionally, anaerobic nitric oxide reductase; uses NADH to detoxify nitric oxide (NO), protecting several 4Fe-4S NO-sensitive enzymes. Has at least 2 reductase partners, only one of which (NorW, flavorubredoxin reductase) has been identified. NO probably binds to the di-iron center; electrons enter from the NorW at rubredoxin and are transferred sequentially to the FMN center and the di-iron center. Also able to function as an aerobic oxygen reductase. This Citrobacter koseri (strain ATCC BAA-895 / CDC 4225-83 / SGSC4696) protein is Anaerobic nitric oxide reductase flavorubredoxin.